The chain runs to 365 residues: Baculoviral IAP repeat-containing protein 7 (365 aa).

BIR repeat units lie at residues 7–73 (RQRS…PFLQ) and 115–180 (RLGS…DFLL). Residues C149, C152, H169, and C176 each contribute to the Zn(2+) site. Residues 186–234 (AFIRSVQESFFSSPETSPESVGSYEGSPVSSPGSPPVCPFLSTSVAQGA) form a self-inhibits the anti-apoptotic function region. S198 carries the post-translational modification Phosphoserine. Residue S202 is modified to Phosphoserine; by MAPK1. A Phosphoserine modification is found at S212. S216 and S219 each carry phosphoserine; by MAPK1. The disordered stretch occupies residues 278–306 (TESVSVPRAPTQRERPEPPKEPAPPLSTE). Residues 288–297 (TQRERPEPPK) show a composition bias toward basic and acidic residues. The RING-type zinc finger occupies 318–353 (CKVCMDNDVSMVFVPCGHLVVCTECAPNLRHCPICR).

The protein belongs to the IAP family. Post-translationally, auto-ubiquitinated, and degraded in a 2-step mechanism; a caspase-independent first step and a caspase-dependent second step. Phosphorylated via MAPK-dependent and CDK-dependent pathways during oocyte maturation. Phosphorylation does not appear to affect caspase inhibition or autoubiquitination activity.

The protein resides in the cytoplasm. It carries out the reaction S-ubiquitinyl-[E2 ubiquitin-conjugating enzyme]-L-cysteine + [acceptor protein]-L-lysine = [E2 ubiquitin-conjugating enzyme]-L-cysteine + N(6)-ubiquitinyl-[acceptor protein]-L-lysine.. Its function is as follows. Weak apoptotic suppressor. Has E3 ubiquitin-protein ligase activity. Weak inhibitor of caspase activity. This is Baculoviral IAP repeat-containing protein 7 (birc7) from Xenopus tropicalis (Western clawed frog).